Here is a 617-residue protein sequence, read N- to C-terminus: Probable Xaa-Pro aminopeptidase P (617 aa).

4 residues coordinate Mn(2+): Asp414, Asp425, Glu523, and Glu537.

The protein belongs to the peptidase M24B family. Mn(2+) serves as cofactor.

The enzyme catalyses Release of any N-terminal amino acid, including proline, that is linked to proline, even from a dipeptide or tripeptide.. Functionally, catalyzes the removal of a penultimate prolyl residue from the N-termini of peptides. This is Probable Xaa-Pro aminopeptidase P (AMPP) from Ajellomyces dermatitidis (strain ER-3 / ATCC MYA-2586) (Blastomyces dermatitidis).